The sequence spans 101 residues: Small ribosomal subunit protein uS14 (101 aa).

This sequence belongs to the universal ribosomal protein uS14 family. Part of the 30S ribosomal subunit. Contacts proteins S3 and S10.

Binds 16S rRNA, required for the assembly of 30S particles and may also be responsible for determining the conformation of the 16S rRNA at the A site. This is Small ribosomal subunit protein uS14 from Bartonella henselae (strain ATCC 49882 / DSM 28221 / CCUG 30454 / Houston 1) (Rochalimaea henselae).